The following is a 602-amino-acid chain: (R)-limonene synthase (602 aa).

Aspartate 356, aspartate 360, aspartate 500, threonine 504, and glutamate 508 together coordinate Mg(2+). Positions 356–360 (DDVYD) match the DDXXD motif motif.

Belongs to the terpene synthase family. Mg(2+) serves as cofactor. Mn(2+) is required as a cofactor.

The enzyme catalyses (2E)-geranyl diphosphate = (4R)-limonene + diphosphate. Its function is as follows. Catalyzes the formation of (R)-(+)-limonene, terpinolene, (1R,5S)-(+)-camphene, (1R,5R)-(+)-alpha-pinene, beta-myrcene and traces of alpha-phellandrene. This is (R)-limonene synthase from Lavandula angustifolia (Lavender).